Consider the following 122-residue polypeptide: Large ribosomal subunit protein uL18 (122 aa).

Belongs to the universal ribosomal protein uL18 family. In terms of assembly, part of the 50S ribosomal subunit; part of the 5S rRNA/L5/L18/L25 subcomplex. Contacts the 5S and 23S rRNAs.

Its function is as follows. This is one of the proteins that bind and probably mediate the attachment of the 5S RNA into the large ribosomal subunit, where it forms part of the central protuberance. The polypeptide is Large ribosomal subunit protein uL18 (Synechococcus sp. (strain JA-3-3Ab) (Cyanobacteria bacterium Yellowstone A-Prime)).